The sequence spans 356 residues: MPILKQLVSSSVHSKRRSRADLTAEMISAPLGDFRHTMHVGRAGDAFGDTSFLNSKAGEPDGESLDEQPSSSSSKRSLLSRKFRGSKRSQSVTRGEREQRDMLGSLRDSALFVKNAMSLPQLNEKEAAEKGTSKLPKSLSSSPVKKANDGEGGDEEAGTEEAVPRRNGAAGPHSPDPLLDEQAFGDLTDLPVVPKATYGLKHAESIMSFHIDLGPSMLGDVLSIMDKEEWDPEEGEGGYHGDEGAAGTITQAPPYAVAAPPLARQEGKAGPDLPSLPSHALEDEGWAAAAPSPGSARSMGSHTTRDSSSLSSCTSGILEERSPAFRGPDRARAAVSRQPDKEFSFMDEEEEDEIRV.

Lysine 5 bears the N6-methyllysine mark. Position 18 is a phosphoserine (serine 18). Residues 27–41 form the CRIB domain; it reads ISAPLGDFRHTMHVG. A disordered region spans residues 51-102; it reads SFLNSKAGEPDGESLDEQPSSSSSKRSLLSRKFRGSKRSQSVTRGEREQRDM. Serine 64 carries the post-translational modification Phosphoserine. Over residues 78-87 the composition is skewed to basic residues; sequence LLSRKFRGSK. Phosphoserine occurs at positions 105, 109, and 118. Disordered regions lie at residues 122–182 and 257–356; these read LNEK…LDEQ and VAAP…EIRV. Over residues 123 to 132 the composition is skewed to basic and acidic residues; sequence NEKEAAEKGT. Low complexity predominate over residues 133 to 143; the sequence is SKLPKSLSSSP. Phosphoserine is present on residues serine 138, serine 140, serine 142, serine 174, serine 292, and serine 295. Low complexity predominate over residues 287–315; the sequence is AAAAPSPGSARSMGSHTTRDSSSLSSCTS. Positions 318 to 344 are enriched in basic and acidic residues; sequence LEERSPAFRGPDRARAAVSRQPDKEFS. Positions 345 to 356 are enriched in acidic residues; it reads FMDEEEEDEIRV.

This sequence belongs to the BORG/CEP family. Interacts with CDC42 and RHOQ, in a GTP-dependent manner. In terms of tissue distribution, not detected in any of the adult tissues tested. May be expressed only in fetal or embryonic tissues.

It localises to the endomembrane system. It is found in the cytoplasm. The protein resides in the cytoskeleton. In terms of biological role, probably involved in the organization of the actin cytoskeleton. May act downstream of CDC42 to induce actin filament assembly leading to cell shape changes. Induces pseudopodia formation, when overexpressed in fibroblasts. The chain is Cdc42 effector protein 4 (CDC42EP4) from Homo sapiens (Human).